Reading from the N-terminus, the 315-residue chain is G-box-binding factor 1 (315 aa).

Disordered regions lie at residues 1-56 (MGTS…GSPS) and 93-268 (MPMP…RDEL). Residues 46-56 (PFFPSPVGSPS) show a composition bias toward pro residues. 2 stretches are compositionally biased toward polar residues: residues 133-164 (GSGNDGASHSDESVTAGSSDENDENANQQEQG) and 178-187 (ASSQSTTGEI). The bZIP domain maps to 222 to 285 (ELKRQKRKQS…DKLKSENNSI (64 aa)). Residues 224 to 243 (KRQKRKQSNRESARRSRLRK) are basic motif. Over residues 249–262 (QLQQRVESLSNENQ) the composition is skewed to polar residues. Residues 250 to 285 (LQQRVESLSNENQSLRDELQRLSSECDKLKSENNSI) form a leucine-zipper region.

The protein belongs to the bZIP family. Monomer and heterodimers with BZIP16 and BZIP68. Interacts with GIP1. Post-translationally, phosphorylated by CK2. Found in both light and dark grown leaves.

It localises to the nucleus. Binds to the G-box motif (5'-CCACGTGG-3') of the rbcS-1A gene promoter. G-box and G-box-like motifs are cis-acting elements defined in promoters of certain plant genes which are regulated by such diverse stimuli as light-induction or hormone control. Binds to the G-box motif 5'-CACGTG-3' of LHCB2.4 (At3g27690) promoter. May act as transcriptional activator in light-regulated expression of LHCB2.4. Probably binds DNA as monomer. DNA-binding activity is redox-dependent. The sequence is that of G-box-binding factor 1 (GBF1) from Arabidopsis thaliana (Mouse-ear cress).